A 310-amino-acid polypeptide reads, in one-letter code: Lipoyl synthase (310 aa).

7 residues coordinate [4Fe-4S] cluster: Cys61, Cys66, Cys72, Cys87, Cys91, Cys94, and Ser300. Residues 73 to 289 (FNNGTATFMI…EYIALSLGFS (217 aa)) enclose the Radical SAM core domain.

Belongs to the radical SAM superfamily. Lipoyl synthase family. The cofactor is [4Fe-4S] cluster.

The protein localises to the cytoplasm. It catalyses the reaction [[Fe-S] cluster scaffold protein carrying a second [4Fe-4S](2+) cluster] + N(6)-octanoyl-L-lysyl-[protein] + 2 oxidized [2Fe-2S]-[ferredoxin] + 2 S-adenosyl-L-methionine + 4 H(+) = [[Fe-S] cluster scaffold protein] + N(6)-[(R)-dihydrolipoyl]-L-lysyl-[protein] + 4 Fe(3+) + 2 hydrogen sulfide + 2 5'-deoxyadenosine + 2 L-methionine + 2 reduced [2Fe-2S]-[ferredoxin]. It functions in the pathway protein modification; protein lipoylation via endogenous pathway; protein N(6)-(lipoyl)lysine from octanoyl-[acyl-carrier-protein]: step 2/2. Its function is as follows. Catalyzes the radical-mediated insertion of two sulfur atoms into the C-6 and C-8 positions of the octanoyl moiety bound to the lipoyl domains of lipoate-dependent enzymes, thereby converting the octanoylated domains into lipoylated derivatives. This is Lipoyl synthase from Buchnera aphidicola subsp. Cinara cedri (strain Cc).